The sequence spans 240 residues: Adenosylcobinamide-GDP ribazoletransferase (240 aa).

Transmembrane regions (helical) follow at residues 31-51, 62-81, 109-129, 133-153, and 179-199; these read LLYYPLVGLLFGLLLWLASHL, ALLLTLWVLLSGALHLDGLA, IAVVTLVLVLLLKFCALWVLV, IGAQLLLAPLIGRAAMLGLFL, and VLLVCVLFCLFLGGWSVLLAL.

The protein belongs to the CobS family. Mg(2+) serves as cofactor.

The protein localises to the cell inner membrane. It carries out the reaction alpha-ribazole + adenosylcob(III)inamide-GDP = adenosylcob(III)alamin + GMP + H(+). The enzyme catalyses alpha-ribazole 5'-phosphate + adenosylcob(III)inamide-GDP = adenosylcob(III)alamin 5'-phosphate + GMP + H(+). It functions in the pathway cofactor biosynthesis; adenosylcobalamin biosynthesis; adenosylcobalamin from cob(II)yrinate a,c-diamide: step 7/7. In terms of biological role, joins adenosylcobinamide-GDP and alpha-ribazole to generate adenosylcobalamin (Ado-cobalamin). Also synthesizes adenosylcobalamin 5'-phosphate from adenosylcobinamide-GDP and alpha-ribazole 5'-phosphate. The protein is Adenosylcobinamide-GDP ribazoletransferase of Pseudomonas putida (strain ATCC 700007 / DSM 6899 / JCM 31910 / BCRC 17059 / LMG 24140 / F1).